We begin with the raw amino-acid sequence, 865 residues long: Leucine-rich repeat-containing protein 66 (865 aa).

Residues F4–P24 traverse the membrane as a helical segment. N42 carries N-linked (GlcNAc...) asparagine glycosylation. 5 LRR repeats span residues R138–K160, P161–G182, Q185–G206, K209–A230, and N235–Q255. Residue N248 is glycosylated (N-linked (GlcNAc...) asparagine). The helical transmembrane segment at A366–F386 threads the bilayer. Disordered stretches follow at residues R463–H522 and D654–V749. A compositionally biased stretch (polar residues) spans M470–G479. Over residues A675–L688 the composition is skewed to basic and acidic residues. The segment covering F702–R713 has biased composition (polar residues). A phosphoserine mark is found at S714 and S748. The LRRNT domain maps to S728–E759. N787 carries N-linked (GlcNAc...) asparagine glycosylation. The segment at F840–K865 is disordered. Positions D855 to K865 are enriched in acidic residues.

The protein resides in the membrane. This Rattus norvegicus (Rat) protein is Leucine-rich repeat-containing protein 66 (Lrrc66).